Consider the following 80-residue polypeptide: EMBRYO SURROUNDING FACTOR 1-like protein 1 (80 aa).

Residues 1–22 (MKSSHIALLCIVVLSLFALHEC) form the signal peptide. 4 disulfides stabilise this stretch: Cys-38/Cys-52, Cys-43/Cys-78, Cys-50/Cys-74, and Cys-53/Cys-64.

The protein belongs to the MEG family. As to expression, expressed in leaves.

In Arabidopsis thaliana (Mouse-ear cress), this protein is EMBRYO SURROUNDING FACTOR 1-like protein 1 (ESFL1).